A 601-amino-acid polypeptide reads, in one-letter code: 4-hydroxy-3-methylbut-2-en-1-yl diphosphate synthase (flavodoxin) (601 aa).

[4Fe-4S] cluster contacts are provided by Cys-507, Cys-510, Cys-542, and Glu-549.

The protein belongs to the IspG family. [4Fe-4S] cluster is required as a cofactor.

It carries out the reaction (2E)-4-hydroxy-3-methylbut-2-enyl diphosphate + oxidized [flavodoxin] + H2O + 2 H(+) = 2-C-methyl-D-erythritol 2,4-cyclic diphosphate + reduced [flavodoxin]. It functions in the pathway isoprenoid biosynthesis; isopentenyl diphosphate biosynthesis via DXP pathway; isopentenyl diphosphate from 1-deoxy-D-xylulose 5-phosphate: step 5/6. Functionally, converts 2C-methyl-D-erythritol 2,4-cyclodiphosphate (ME-2,4cPP) into 1-hydroxy-2-methyl-2-(E)-butenyl 4-diphosphate. The protein is 4-hydroxy-3-methylbut-2-en-1-yl diphosphate synthase (flavodoxin) of Chlamydia muridarum (strain MoPn / Nigg).